The following is an 855-amino-acid chain: Envelope glycoprotein gp150 (855 aa).

Topologically, residues 1–784 (MAEGFAVNRQ…WLGNIPRYLK (784 aa)) are extracellular. N-linked (GlcNAc...) asparagine; by host glycosylation is found at N220, N258, N269, N274, N298, N330, N336, N342, N418, N422, N448, N469, N481, N499, N518, N531, and N548. The segment at 615-635 (VMLALATVLSMAGAGTGATAI) is fusion peptide. Residues 642 to 692 (HQVLATHQETIEKITEALKVNNLRLVTLEHQVLVIGLKVEAIEKFLYTAFA) are a coiled coil. Residues 661–679 (VNNLRLVTLEHQVLVIGLK) are immunosuppression. Residues N716, N720, and N736 are each glycosylated (N-linked (GlcNAc...) asparagine; by host). Residues 735 to 771 (YNQTKDLQQKFYEIIMDMEQNNVQGRKGLQQLQEWED) are a coiled coil. A helical transmembrane segment spans residues 785 to 805 (GLLGGILGIGLGVLLLILCLP). Over 806–855 (TLVDCIRNCISKVLGYTVIAMPEVEEEEIQPPMELRRNGRQCDMSEKEEE) the chain is Cytoplasmic. The segment at 835 to 855 (QPPMELRRNGRQCDMSEKEEE) is disordered.

As to quaternary structure, the mature envelope protein (Env) consists of a trimer of SU-TM heterodimers attached by noncovalent interactions or by a labile interchain disulfide bond. Post-translationally, specific enzymatic cleavages in vivo yield mature proteins. Envelope glycoproteins are synthesized as an inactive precursor that is N-glycosylated and processed likely by host cell furin or by a furin-like protease in the Golgi to yield the mature SU and TM proteins. The cleavage site between SU and TM requires the minimal sequence [KR]-X-[KR]-R.

The protein resides in the virion membrane. It localises to the host cell membrane. The surface protein (SU) attaches the virus to the host cell by binding to its receptor. This interaction triggers the refolding of the transmembrane protein (TM) and is thought to activate its fusogenic potential by unmasking its fusion peptide. Fusion occurs at the host cell plasma membrane. Its function is as follows. The transmembrane protein (TM) acts as a class I viral fusion protein. Under the current model, the protein has at least 3 conformational states: pre-fusion native state, pre-hairpin intermediate state, and post-fusion hairpin state. During viral and target cell membrane fusion, the coiled coil regions (heptad repeats) assume a trimer-of-hairpins structure, positioning the fusion peptide in close proximity to the C-terminal region of the ectodomain. The formation of this structure appears to drive apposition and subsequent fusion of viral and target cell membranes. Membranes fusion leads to delivery of the nucleocapsid into the cytoplasm. This is Envelope glycoprotein gp150 (env) from Feline immunodeficiency virus (strain UK2) (FIV).